The following is a 493-amino-acid chain: Cytochrome P450 2A9 (493 aa).

A heme-binding site is contributed by cysteine 438.

The protein belongs to the cytochrome P450 family. It depends on heme as a cofactor. As to expression, liver.

The protein localises to the endoplasmic reticulum membrane. It localises to the microsome membrane. It catalyses the reaction an organic molecule + reduced [NADPH--hemoprotein reductase] + O2 = an alcohol + oxidized [NADPH--hemoprotein reductase] + H2O + H(+). Its function is as follows. Cytochromes P450 are a group of heme-thiolate monooxygenases. In liver microsomes, this enzyme is involved in an NADPH-dependent electron transport pathway. It oxidizes a variety of structurally unrelated compounds, including steroids, fatty acids, and xenobiotics. This Mesocricetus auratus (Golden hamster) protein is Cytochrome P450 2A9 (CYP2A9).